Consider the following 310-residue polypeptide: tRNA uridine(34) hydroxylase (310 aa).

In terms of domain architecture, Rhodanese spans 127 to 225; that stretch reads KDKNTIVVDT…YLEDMSKEES (99 aa). Cys185 functions as the Cysteine persulfide intermediate in the catalytic mechanism.

The protein belongs to the TrhO family.

It carries out the reaction uridine(34) in tRNA + AH2 + O2 = 5-hydroxyuridine(34) in tRNA + A + H2O. Its function is as follows. Catalyzes oxygen-dependent 5-hydroxyuridine (ho5U) modification at position 34 in tRNAs. The sequence is that of tRNA uridine(34) hydroxylase from Prochlorococcus marinus subsp. pastoris (strain CCMP1986 / NIES-2087 / MED4).